A 264-amino-acid polypeptide reads, in one-letter code: 3-methyl-2-oxobutanoate hydroxymethyltransferase (264 aa).

Mg(2+)-binding residues include aspartate 45 and aspartate 84. 3-methyl-2-oxobutanoate is bound by residues 45–46 (DS), aspartate 84, and lysine 112. Glutamate 114 is a Mg(2+) binding site. Glutamate 181 functions as the Proton acceptor in the catalytic mechanism.

Belongs to the PanB family. Homodecamer; pentamer of dimers. Mg(2+) is required as a cofactor.

The protein localises to the cytoplasm. The enzyme catalyses 3-methyl-2-oxobutanoate + (6R)-5,10-methylene-5,6,7,8-tetrahydrofolate + H2O = 2-dehydropantoate + (6S)-5,6,7,8-tetrahydrofolate. It functions in the pathway cofactor biosynthesis; (R)-pantothenate biosynthesis; (R)-pantoate from 3-methyl-2-oxobutanoate: step 1/2. Catalyzes the reversible reaction in which hydroxymethyl group from 5,10-methylenetetrahydrofolate is transferred onto alpha-ketoisovalerate to form ketopantoate. This Vibrio campbellii (strain ATCC BAA-1116) protein is 3-methyl-2-oxobutanoate hydroxymethyltransferase.